We begin with the raw amino-acid sequence, 557 residues long: 2-isopropylmalate synthase (557 aa).

The 274-residue stretch at 31–304 (PTWCSVDLRD…DPGLNFASML (274 aa)) folds into the Pyruvate carboxyltransferase domain. 4 residues coordinate Mg(2+): Asp40, His243, His245, and Asn279. The interval 439-557 (IENPIKFLNF…NTMIKDSAAV (119 aa)) is regulatory domain.

It belongs to the alpha-IPM synthase/homocitrate synthase family. LeuA type 2 subfamily. Homodimer. Requires Mg(2+) as cofactor.

Its subcellular location is the cytoplasm. It catalyses the reaction 3-methyl-2-oxobutanoate + acetyl-CoA + H2O = (2S)-2-isopropylmalate + CoA + H(+). Its pathway is amino-acid biosynthesis; L-leucine biosynthesis; L-leucine from 3-methyl-2-oxobutanoate: step 1/4. Its function is as follows. Catalyzes the condensation of the acetyl group of acetyl-CoA with 3-methyl-2-oxobutanoate (2-ketoisovalerate) to form 3-carboxy-3-hydroxy-4-methylpentanoate (2-isopropylmalate). The sequence is that of 2-isopropylmalate synthase from Desulfitobacterium hafniense (strain Y51).